Here is a 489-residue protein sequence, read N- to C-terminus: MPVTFALLLLLGQATADPCYDPQGRPQFCLPPVTQLAAVAASCPQACALSPGNHLGARETCNGSLTLALGGPFLLTSVSLRFCTPGPPALILSAAWASGGPWRLLWHRPAWPGALGGPERVTFHSTPGPKATVAASHLRVEFGGQAGLAAAGLRGRCQCHGHAARCAARARPPRCHCRHHTTGPGCESCRPSHRDWPWRPATPRHPHPCLPCSCNQHARRCRFNSELFRLSGGRSGGVCERCRHHTAGRHCHYCQPGFWRDPSQPIFSRRACRACQCHPIGATGGTCNQTSGQCTCKLGVTGLTCNRCGPGYQQSRSPRMPCQRIPEATTTLATTPGAYSSDPQCQNYCNMSDTRVHMSLRRYCQQDHVLRAQVLASEAAGPAWQRLAVRVLAVYKQRAQPVRRGDQDAWVPRADLTCGCLRLQPGTDYLLLGSAVGDPDPTRLILDRHGLALPWRPRWARPLKRLQQEERAGGCRGVRAPTPSPRPEH.

The N-terminal stretch at 1–16 (MPVTFALLLLLGQATA) is a signal peptide. Asparagine 62 carries N-linked (GlcNAc...) asparagine glycosylation. Disulfide bonds link cysteine 157/cysteine 166, cysteine 159/cysteine 175, cysteine 177/cysteine 186, cysteine 189/cysteine 209, cysteine 212/cysteine 221, cysteine 214/cysteine 239, cysteine 242/cysteine 251, cysteine 254/cysteine 272, cysteine 275/cysteine 287, cysteine 277/cysteine 294, cysteine 296/cysteine 305, cysteine 308/cysteine 322, cysteine 345/cysteine 418, cysteine 349/cysteine 420, and cysteine 364/cysteine 475. Laminin EGF-like domains lie at 157-211 (CQCH…PCLP), 212-274 (CSCN…ACRA), and 275-324 (CQCH…PCQR). The NTR domain occupies 345–475 (CQNYCNMSDT…LQQEERAGGC (131 aa)). The interval 470–489 (ERAGGCRGVRAPTPSPRPEH) is disordered.

The protein resides in the secreted. Functionally, plays a role in neurogenesis. Prevents motor neuron cell body migration out of the neural tube. The protein is Netrin-5 (NTN5) of Homo sapiens (Human).